Reading from the N-terminus, the 560-residue chain is Interferon alpha/beta receptor 1 (560 aa).

An N-terminal signal peptide occupies residues 1–24 (MLSLLGATTLMLVAGRWVLPAASG). At 25–437 (EANLKSENVE…EKTKPGNTSK (413 aa)) the chain is on the extracellular side. N-linked (GlcNAc...) asparagine glycans are attached at residues Asn-47 and Asn-55. An intrachain disulfide couples Cys-76 to Cys-84. N-linked (GlcNAc...) asparagine glycans are attached at residues Asn-85, Asn-108, Asn-109, and Asn-172. 3 consecutive Fibronectin type-III domains span residues 126 to 226 (QIGP…TTER), 231 to 329 (SPEN…TEVK), and 333 to 433 (FPPV…TKPG). A disulfide bond links Cys-199 and Cys-220. N-linked (GlcNAc...) asparagine glycosylation is found at Asn-222, Asn-285, Asn-313, Asn-359, and Asn-377. An intrachain disulfide couples Cys-283 to Cys-291. Cys-404 and Cys-427 are joined by a disulfide. The N-linked (GlcNAc...) asparagine glycan is linked to Asn-434. A helical membrane pass occupies residues 438 to 458 (TWLIAGICTALFSILVVIYVV). Over 459–560 (RVFLRCVKYV…SEEFLQQDSV (102 aa)) the chain is Cytoplasmic. A lipid anchor (S-palmitoyl cysteine) is attached at Cys-464. Phosphotyrosine; by TYK2 is present on residues Tyr-467 and Tyr-482. Residues 492-501 (LLSTSEEQTE) are important for interaction with TYK2. Phosphoserine is present on residues Ser-496 and Ser-536. A disordered region spans residues 524 to 560 (VHEEYNSQASQDSGNYSNEDENSGSKISEEFLQQDSV). Polar residues predominate over residues 529 to 540 (NSQASQDSGNYS).

Belongs to the type II cytokine receptor family. As to quaternary structure, heterodimer with IFNAR2; forming the receptor for type I interferon. Interacts with TYK2. Interacts with STAT1 and STAT2; the interaction requires its phosphorylation at Tyr-482. Interacts (serine-phosphorylated form) with FBXW11, the substrate recognition component of a SCF (SKP1-CUL1-F-box protein) E3 ubiquitin-protein ligase complex. Interacts with SHMT2; this promotes interaction with ABRAXAS2 and the BRISC complex. Interacts with TRIM10; this interaction prevents association between IFNAR1 and TYK2. In terms of processing, ubiquitinated, leading to its internalization and degradation. Polyubiquitinated via 'Lys-48'-linked and 'Lys-63'-linked ubiquitin chains, leading to receptor internalization and lysosomal degradation. The 'Lys-63'-linked ubiquitin chains are cleaved off by the BRISC complex. Post-translationally, phosphorylated on tyrosine residues in response to interferon-binding: phosphorylation by TYK2 tyrosine kinase creates docking sites for STAT proteins. Phosphorylated on serine residues in response to interferon binding; this promotes interaction with FBXW11 and ubiquitination. Palmitoylation at Cys-464 is required for the activation of STAT1 and STAT2. As to expression, expressed in the endometrium. Expressed in all tissues examined except conceptus at day 15 of pregnancy.

The protein resides in the cell membrane. It is found in the late endosome. The protein localises to the lysosome. Functionally, together with IFNAR2, forms the heterodimeric receptor for type I interferons (including interferons alpha, beta, epsilon, omega and kappa). Type I interferon binding activates the JAK-STAT signaling cascade, resulting in transcriptional activation or repression of interferon-regulated genes that encode the effectors of the interferon response. Mechanistically, type I interferon-binding brings the IFNAR1 and IFNAR2 subunits into close proximity with one another, driving their associated Janus kinases (JAKs) (TYK2 bound to IFNAR1 and JAK1 bound to IFNAR2) to cross-phosphorylate one another. The activated kinases phosphorylate specific tyrosine residues on the intracellular domains of IFNAR1 and IFNAR2, forming docking sites for the STAT transcription factors. STAT proteins are then phosphorylated by the JAKs, promoting their translocation into the nucleus to regulate expression of interferon-regulated genes. Can also act independently of IFNAR2: form an active IFNB1 receptor by itself and activate a signaling cascade that does not involve activation of the JAK-STAT pathway. In Ovis aries (Sheep), this protein is Interferon alpha/beta receptor 1 (IFNAR1).